The sequence spans 342 residues: Outer spore wall protein RRT8 (342 aa).

The Cytoplasmic portion of the chain corresponds to 1-109; that stretch reads MKAGIELISH…VLTNPVYWKH (109 aa). Residues 110 to 130 traverse the membrane as a helical segment; it reads ILLFAVCYALIFVTIAGLFYV. Residue T131 is a topological domain, extracellular. A helical membrane pass occupies residues 132–152; sequence LVPLLVTWAILLLGPLGVILV. The Cytoplasmic portion of the chain corresponds to 153–240; the sequence is HIQWILQTNV…PRLLFRMFFK (88 aa). A helical transmembrane segment spans residues 241–261; it reads VSNFTSLTLLSLIPIVGPILA. Residues 262-299 are Extracellular-facing; sequence NQLMAPKRTFTYLQRYFLLKGFSKKQAKDFQYEHYASF. A helical membrane pass occupies residues 300 to 320; it reads ICFGMSAGLLELIPFFTIVTI. At 321 to 342 the chain is on the cytoplasmic side; it reads SSNTVGAAKWCTSLLKGERKKE.

Belongs to the LDS family.

The protein resides in the prospore membrane. The protein localises to the lipid droplet. Its subcellular location is the spore wall. In terms of biological role, involved in spore wall assembly. May be involved in the modulation of rDNA transcription. The protein is Outer spore wall protein RRT8 of Saccharomyces cerevisiae (strain ATCC 204508 / S288c) (Baker's yeast).